The sequence spans 291 residues: Lipoyl synthase, mitochondrial (291 aa).

Residues Cys-45, Cys-50, Cys-56, Cys-71, Cys-75, Cys-78, and Ser-283 each contribute to the [4Fe-4S] cluster site. A Radical SAM core domain is found at 57-272 (WGEGTATFMI…EKIGKELGFR (216 aa)).

It belongs to the radical SAM superfamily. Lipoyl synthase family. [4Fe-4S] cluster serves as cofactor.

The protein resides in the mitochondrion. It carries out the reaction [[Fe-S] cluster scaffold protein carrying a second [4Fe-4S](2+) cluster] + N(6)-octanoyl-L-lysyl-[protein] + 2 oxidized [2Fe-2S]-[ferredoxin] + 2 S-adenosyl-L-methionine + 4 H(+) = [[Fe-S] cluster scaffold protein] + N(6)-[(R)-dihydrolipoyl]-L-lysyl-[protein] + 4 Fe(3+) + 2 hydrogen sulfide + 2 5'-deoxyadenosine + 2 L-methionine + 2 reduced [2Fe-2S]-[ferredoxin]. The protein operates within protein modification; protein lipoylation via endogenous pathway; protein N(6)-(lipoyl)lysine from octanoyl-[acyl-carrier-protein]: step 2/2. Catalyzes the radical-mediated insertion of two sulfur atoms into the C-6 and C-8 positions of the octanoyl moiety bound to the lipoyl domains of lipoate-dependent enzymes, thereby converting the octanoylated domains into lipoylated derivatives. This chain is Lipoyl synthase, mitochondrial, found in Nematostella vectensis (Starlet sea anemone).